We begin with the raw amino-acid sequence, 435 residues long: GTPase Der (435 aa).

2 consecutive EngA-type G domains span residues 4-167 (PVVA…PAEK) and 175-350 (ISFS…DNQN). Residues 10 to 17 (GQPNVGKS), 57 to 61 (DTGGI), 119 to 122 (NKAD), 181 to 188 (GRPNVGKS), 228 to 232 (DTAGI), and 293 to 296 (NKWD) contribute to the GTP site. In terms of domain architecture, KH-like spans 351–435 (QRIQSSVLND…PIKILPRKRK (85 aa)).

This sequence belongs to the TRAFAC class TrmE-Era-EngA-EngB-Septin-like GTPase superfamily. EngA (Der) GTPase family. In terms of assembly, associates with the 50S ribosomal subunit.

GTPase that plays an essential role in the late steps of ribosome biogenesis. The polypeptide is GTPase Der (Lactobacillus helveticus (strain DPC 4571)).